The chain runs to 160 residues: Ribosomal RNA large subunit methyltransferase H (160 aa).

Positions 76 and 108 each coordinate S-adenosyl-L-methionine.

This sequence belongs to the RNA methyltransferase RlmH family. As to quaternary structure, homodimer.

It is found in the cytoplasm. It carries out the reaction pseudouridine(1915) in 23S rRNA + S-adenosyl-L-methionine = N(3)-methylpseudouridine(1915) in 23S rRNA + S-adenosyl-L-homocysteine + H(+). Functionally, specifically methylates the pseudouridine at position 1915 (m3Psi1915) in 23S rRNA. The sequence is that of Ribosomal RNA large subunit methyltransferase H from Nitrobacter hamburgensis (strain DSM 10229 / NCIMB 13809 / X14).